The primary structure comprises 205 residues: Histidine biosynthesis bifunctional protein HisIE (205 aa).

The segment at M1–V116 is phosphoribosyl-AMP cyclohydrolase. Positions L117–K205 are phosphoribosyl-ATP pyrophosphohydrolase.

The protein in the N-terminal section; belongs to the PRA-CH family. This sequence in the C-terminal section; belongs to the PRA-PH family.

Its subcellular location is the cytoplasm. The enzyme catalyses 1-(5-phospho-beta-D-ribosyl)-ATP + H2O = 1-(5-phospho-beta-D-ribosyl)-5'-AMP + diphosphate + H(+). It carries out the reaction 1-(5-phospho-beta-D-ribosyl)-5'-AMP + H2O = 1-(5-phospho-beta-D-ribosyl)-5-[(5-phospho-beta-D-ribosylamino)methylideneamino]imidazole-4-carboxamide. The protein operates within amino-acid biosynthesis; L-histidine biosynthesis; L-histidine from 5-phospho-alpha-D-ribose 1-diphosphate: step 2/9. It functions in the pathway amino-acid biosynthesis; L-histidine biosynthesis; L-histidine from 5-phospho-alpha-D-ribose 1-diphosphate: step 3/9. The sequence is that of Histidine biosynthesis bifunctional protein HisIE (hisI) from Aquifex aeolicus (strain VF5).